The following is a 92-amino-acid chain: PqqA binding protein (92 aa).

This sequence belongs to the PqqD family. As to quaternary structure, monomer. Interacts with PqqE.

The protein operates within cofactor biosynthesis; pyrroloquinoline quinone biosynthesis. Its function is as follows. Functions as a PqqA binding protein and presents PqqA to PqqE, in the pyrroloquinoline quinone (PQQ) biosynthetic pathway. This Stutzerimonas stutzeri (strain A1501) (Pseudomonas stutzeri) protein is PqqA binding protein.